The primary structure comprises 143 residues: Ponticulin (143 aa).

Positions 1-22 (MLVLRNLLALVTLALLFTLSSA) are cleaved as a signal peptide. Asn111 carries an N-linked (GlcNAc...) asparagine glycan. Ser118 is lipidated: GPI-like-anchor amidated serine. Positions 119 to 143 (SSGSTVMIGLASSLLFAFATLLALF) are cleaved as a propeptide — removed in mature form.

The protein belongs to the ponticulin family. Monomer. Disulfide bond(s) stabilize the native, actin-binding conformation of ponticulin. Post-translationally, the GPI-like-anchor contains a phosphoceramide group, rather than a phosphatidyl group.

The protein localises to the cell membrane. Its function is as follows. Binds F-actin and nucleates actin assembly. Major high affinity link between the plasma membrane and the cortical actin network. The chain is Ponticulin (ponA) from Dictyostelium discoideum (Social amoeba).